Reading from the N-terminus, the 156-residue chain is Phytohormone-binding protein (156 aa).

Residues Q22, Q68, and T141 each contribute to the gibberellin A3 site.

It belongs to the BetVI family.

Binds gibberellin A3 (GA3) in vitro. This chain is Phytohormone-binding protein, found in Medicago truncatula (Barrel medic).